The following is a 61-amino-acid chain: Small ribosomal subunit protein uS14B (61 aa).

Cys24, Cys27, Cys40, and Cys43 together coordinate Zn(2+).

The protein belongs to the universal ribosomal protein uS14 family. Zinc-binding uS14 subfamily. As to quaternary structure, part of the 30S ribosomal subunit. Contacts proteins S3 and S10. Zn(2+) serves as cofactor.

In terms of biological role, binds 16S rRNA, required for the assembly of 30S particles and may also be responsible for determining the conformation of the 16S rRNA at the A site. This chain is Small ribosomal subunit protein uS14B, found in Oceanobacillus iheyensis (strain DSM 14371 / CIP 107618 / JCM 11309 / KCTC 3954 / HTE831).